The chain runs to 416 residues: UDP-N-acetylglucosamine 1-carboxyvinyltransferase (416 aa).

22–23 (KN) serves as a coordination point for phosphoenolpyruvate. Position 92 (Arg-92) interacts with UDP-N-acetyl-alpha-D-glucosamine. The Proton donor role is filled by Cys-116. The residue at position 116 (Cys-116) is a 2-(S-cysteinyl)pyruvic acid O-phosphothioketal. The UDP-N-acetyl-alpha-D-glucosamine site is built by Asp-304 and Ile-326.

The protein belongs to the EPSP synthase family. MurA subfamily.

The protein localises to the cytoplasm. The enzyme catalyses phosphoenolpyruvate + UDP-N-acetyl-alpha-D-glucosamine = UDP-N-acetyl-3-O-(1-carboxyvinyl)-alpha-D-glucosamine + phosphate. The protein operates within cell wall biogenesis; peptidoglycan biosynthesis. In terms of biological role, cell wall formation. Adds enolpyruvyl to UDP-N-acetylglucosamine. The polypeptide is UDP-N-acetylglucosamine 1-carboxyvinyltransferase (Solidesulfovibrio magneticus (strain ATCC 700980 / DSM 13731 / RS-1) (Desulfovibrio magneticus)).